Consider the following 612-residue polypeptide: UvrABC system protein C (612 aa).

One can recognise a GIY-YIG domain in the interval Thr-18 to Ile-96. Residues Pro-208–Val-243 enclose the UVR domain.

It belongs to the UvrC family. As to quaternary structure, interacts with UvrB in an incision complex.

It is found in the cytoplasm. Functionally, the UvrABC repair system catalyzes the recognition and processing of DNA lesions. UvrC both incises the 5' and 3' sides of the lesion. The N-terminal half is responsible for the 3' incision and the C-terminal half is responsible for the 5' incision. The protein is UvrABC system protein C of Hahella chejuensis (strain KCTC 2396).